A 299-amino-acid polypeptide reads, in one-letter code: MNTPLIVICGATATGKSGLALTLAQRLDSIIISADSRQVYREFDIGTAKPTHAEQDLVPHYLIDICSPTQTFTVADYQDKVTKLLQSTPCLSPSLLVGGTGLYIKSIVRGLKIPRVAPQPQLRQELEALGQAQCYAMLNQVDSLGAHKIHPHDQVRTLRALEVFYVTGVPISQQQGEYPPTYPILQIGLDSTPDALEKRIEQRTQMMLTMGLVKEVETLMEKYGSDLPLLNTLGYAEIKEYLQGKMSLDQAKAAIILHTRQFAKRQRTWFRSYREIQWFDPTSVNFLDNVWMTIQQFLA.

10–17 (GATATGKS) contributes to the ATP binding site. A substrate-binding site is contributed by 12-17 (TATGKS). The segment at 35–38 (DSRQ) is interaction with substrate tRNA.

It belongs to the IPP transferase family. Monomer. The cofactor is Mg(2+).

It carries out the reaction adenosine(37) in tRNA + dimethylallyl diphosphate = N(6)-dimethylallyladenosine(37) in tRNA + diphosphate. Catalyzes the transfer of a dimethylallyl group onto the adenine at position 37 in tRNAs that read codons beginning with uridine, leading to the formation of N6-(dimethylallyl)adenosine (i(6)A). This chain is tRNA dimethylallyltransferase, found in Rippkaea orientalis (strain PCC 8801 / RF-1) (Cyanothece sp. (strain PCC 8801)).